A 269-amino-acid polypeptide reads, in one-letter code: Energy-coupling factor transporter transmembrane protein EcfT (269 aa).

6 helical membrane-spanning segments follow: residues 45-65 (RFFL…RVSL), 75-95 (VLWL…GEAI), 110-130 (MAAL…LLTL), 153-173 (FPAH…PTLL), 202-222 (FVPV…DLAL), and 244-264 (CLED…LLFL).

Belongs to the energy-coupling factor EcfT family. As to quaternary structure, forms a stable energy-coupling factor (ECF) transporter complex composed of 2 membrane-embedded substrate-binding proteins (S component), 2 ATP-binding proteins (A component) and 2 transmembrane proteins (T component). May be able to interact with more than 1 S component at a time.

It is found in the cell membrane. Functionally, transmembrane (T) component of an energy-coupling factor (ECF) ABC-transporter complex. Unlike classic ABC transporters this ECF transporter provides the energy necessary to transport a number of different substrates. The sequence is that of Energy-coupling factor transporter transmembrane protein EcfT from Thermanaerovibrio acidaminovorans (strain ATCC 49978 / DSM 6589 / Su883) (Selenomonas acidaminovorans).